Reading from the N-terminus, the 805-residue chain is Leucine--tRNA ligase (805 aa).

The short motif at 40–51 (PYPSGSGLHVGH) is the 'HIGH' region element. Positions 576-580 (KMSKS) match the 'KMSKS' region motif. ATP is bound at residue K579.

The protein belongs to the class-I aminoacyl-tRNA synthetase family.

Its subcellular location is the cytoplasm. It catalyses the reaction tRNA(Leu) + L-leucine + ATP = L-leucyl-tRNA(Leu) + AMP + diphosphate. This chain is Leucine--tRNA ligase, found in Chlorobium phaeovibrioides (strain DSM 265 / 1930) (Prosthecochloris vibrioformis (strain DSM 265)).